A 533-amino-acid polypeptide reads, in one-letter code: Quinate permease (533 aa).

Residues 1 to 21 (MSILALVEDRPTPREVYNWRV) lie on the Cytoplasmic side of the membrane. A helical membrane pass occupies residues 22–42 (YLLAAVASFTSCMIGYDSAFI). The Extracellular portion of the chain corresponds to 43–67 (GTTLSLQSFQNEFNWESLNTDLISA). Residues 68 to 88 (NIVSLYQAGAFFGALFAYPIG) traverse the membrane as a helical segment. At 89-94 (HFWGRR) the chain is on the cytoplasmic side. Residues 95–115 (WGLMFSALIFFLGAGMMLGAN) traverse the membrane as a helical segment. At 116-127 (GDRGLGLIYGGR) the chain is on the extracellular side. Residues 128-148 (VLAGIGVGAGSNICPIYISEM) traverse the membrane as a helical segment. The Cytoplasmic segment spans residues 149–156 (APPAIRGR). Residues 157–177 (LVGVYELGWQIGGVVGFWINY) traverse the membrane as a helical segment. Topologically, residues 178–191 (GVDETLAPSHKQWI) are extracellular. A helical transmembrane segment spans residues 192–212 (IPFAVQLIPAGLLIIGALLIR). Residues 213–282 (ESPRWLFLRG…AWTNKRILYR (70 aa)) lie on the Cytoplasmic side of the membrane. The chain crosses the membrane as a helical span at residues 283–303 (LFLGSMLFLWQNGSGINAINY). Residues 304-324 (YSPRVFKSIGVSGGNTSLLTT) lie on the Extracellular side of the membrane. The helical transmembrane segment at 325 to 346 (GIFGVVKAVITFVWLLYLIDHF) threads the bilayer. The Cytoplasmic portion of the chain corresponds to 347 to 349 (GRR). Residues 350 to 370 (NLLLVGAAGGSVCLWIVGGYI) traverse the membrane as a helical segment. Topologically, residues 371–385 (KIAKPENNPEGTQLD) are extracellular. Residues 386–406 (SGGIAAIFFFYLWTAFYTPSW) traverse the membrane as a helical segment. Residues 407–431 (NGTPWVINSEMFDPTVRSLAQACAA) lie on the Cytoplasmic side of the membrane. A helical membrane pass occupies residues 432 to 452 (ASNWLWNFLISRFTPQMFTSM). At 453-454 (GY) the chain is on the extracellular side. Residues 455-475 (GVYFFFASLMILSIVFVFFLI) form a helical membrane-spanning segment. At 476 to 533 (PETKGVPLESMETLFDKKPVWHAHSQLIRELRENEEAFRADMGASGKGGVTKEYVEEA) the chain is on the cytoplasmic side.

The protein belongs to the major facilitator superfamily. Sugar transporter (TC 2.A.1.1) family. In terms of assembly, interacts with creB. In terms of processing, ubiquitinated. Deubiquitinated by creB, probably to control its activity or amount.

It localises to the cell membrane. Its function is as follows. Integral membrane transporter that imports quinic acid to be catabolized as a carbon source. In Emericella nidulans (strain FGSC A4 / ATCC 38163 / CBS 112.46 / NRRL 194 / M139) (Aspergillus nidulans), this protein is Quinate permease (qutD).